Reading from the N-terminus, the 262-residue chain is Thiazole synthase (262 aa).

The active-site Schiff-base intermediate with DXP is Lys104. Residues Gly165, 191-192 (AG), and 213-214 (NT) contribute to the 1-deoxy-D-xylulose 5-phosphate site.

This sequence belongs to the ThiG family. Homotetramer. Forms heterodimers with either ThiH or ThiS.

Its subcellular location is the cytoplasm. It carries out the reaction [ThiS sulfur-carrier protein]-C-terminal-Gly-aminoethanethioate + 2-iminoacetate + 1-deoxy-D-xylulose 5-phosphate = [ThiS sulfur-carrier protein]-C-terminal Gly-Gly + 2-[(2R,5Z)-2-carboxy-4-methylthiazol-5(2H)-ylidene]ethyl phosphate + 2 H2O + H(+). The protein operates within cofactor biosynthesis; thiamine diphosphate biosynthesis. Catalyzes the rearrangement of 1-deoxy-D-xylulose 5-phosphate (DXP) to produce the thiazole phosphate moiety of thiamine. Sulfur is provided by the thiocarboxylate moiety of the carrier protein ThiS. In vitro, sulfur can be provided by H(2)S. This Alkalilimnicola ehrlichii (strain ATCC BAA-1101 / DSM 17681 / MLHE-1) protein is Thiazole synthase.